We begin with the raw amino-acid sequence, 198 residues long: Recombination protein RecR (198 aa).

The segment at 57-72 adopts a C4-type zinc-finger fold; it reads CSVCGHITDTDPCYIC. The region spanning 80-175 is the Toprim domain; it reads SMICVVEETK…KVTRLAHGLP (96 aa).

Belongs to the RecR family.

Its function is as follows. May play a role in DNA repair. It seems to be involved in an RecBC-independent recombinational process of DNA repair. It may act with RecF and RecO. This Macrococcus caseolyticus (strain JCSC5402) (Macrococcoides caseolyticum) protein is Recombination protein RecR.